Here is a 302-residue protein sequence, read N- to C-terminus: Probable alpha-L-glutamate ligase (302 aa).

The 183-residue stretch at 112-294 (LQLLLKTGVP…IAAEIIDYIE (183 aa)) folds into the ATP-grasp domain. Residues Lys-148, 185-186 (DF), Asp-194, and 218-220 (RAN) each bind ATP. Mg(2+) is bound by residues Asp-255, Glu-267, and Asn-269. Asp-255, Glu-267, and Asn-269 together coordinate Mn(2+).

This sequence belongs to the RimK family. Requires Mg(2+) as cofactor. Mn(2+) is required as a cofactor.

This chain is Probable alpha-L-glutamate ligase, found in Haemophilus influenzae (strain 86-028NP).